A 283-amino-acid chain; its full sequence is MADTHSNNNHVPVLFSFSVFSRASSVPVGSGYEVLIQKFLSIYGSQIDVHRKLVLQYFSEEWGQYIDLPKGFTVSEKCRLRLVPLQMDITTLGNLSPATSVFFCCDMQERFRPAIKYFGDIISVGQRLLQGARILGIPVVVSEQYPKGLGSTVQEMDLTGAKLVFPKTKFSMVIPELEAALAEIPGVRSVVLFGVETHVCIQQTALDLIGRGFEVHIVADATSSRSMMDRMFALERLARTGIIITTSESVLLQLVADKEHPKFKEIQNIIKVSAPESGLLSKV.

This sequence belongs to the isochorismatase family.

This chain is Isochorismatase domain-containing protein 1 (isoc1), found in Danio rerio (Zebrafish).